We begin with the raw amino-acid sequence, 294 residues long: Large ribosomal subunit protein uL18A (294 aa).

The residue at position 10 (Ser10) is a Phosphoserine. Tyr12 is subject to Phosphotyrosine. Ser81 is modified (phosphoserine).

Belongs to the universal ribosomal protein uL18 family. In terms of assembly, component of the large ribosomal subunit (LSU). Mature yeast ribosomes consist of a small (40S) and a large (60S) subunit. The 40S small subunit contains 1 molecule of ribosomal RNA (18S rRNA) and 33 different proteins (encoded by 57 genes). The large 60S subunit contains 3 rRNA molecules (25S, 5.8S and 5S rRNA) and 46 different proteins (encoded by 81 genes). Component of a hexameric 5S RNP precursor complex, composed of 5S RNA, rrs1, rpf2, rpl5a/rpl5b, rpl11a/rpl11b and syo1; this complex acts as a precursor for ribosome assembly. rpl5a/rpl5b/uL18 forms a heterotrimeric complex with syo1 and rpl11a/rpl11b/uL5. Interaction of this complex with KAP104 allows the nuclear import of the heterotrimer.

It is found in the cytoplasm. The protein resides in the nucleus. Functionally, component of the ribosome, a large ribonucleoprotein complex responsible for the synthesis of proteins in the cell. The small ribosomal subunit (SSU) binds messenger RNAs (mRNAs) and translates the encoded message by selecting cognate aminoacyl-transfer RNA (tRNA) molecules. The large subunit (LSU) contains the ribosomal catalytic site termed the peptidyl transferase center (PTC), which catalyzes the formation of peptide bonds, thereby polymerizing the amino acids delivered by tRNAs into a polypeptide chain. The nascent polypeptides leave the ribosome through a tunnel in the LSU and interact with protein factors that function in enzymatic processing, targeting, and the membrane insertion of nascent chains at the exit of the ribosomal tunnel. The sequence is that of Large ribosomal subunit protein uL18A (rpl501) from Schizosaccharomyces pombe (strain 972 / ATCC 24843) (Fission yeast).